A 196-amino-acid chain; its full sequence is Large ribosomal subunit protein uL5 (196 aa).

Belongs to the universal ribosomal protein uL5 family. As to quaternary structure, part of the 50S ribosomal subunit; part of the 5S rRNA/L5/L18/L25 subcomplex. Contacts the 5S rRNA and the P site tRNA. Forms a bridge to the 30S subunit in the 70S ribosome.

In terms of biological role, this is one of the proteins that bind and probably mediate the attachment of the 5S RNA into the large ribosomal subunit, where it forms part of the central protuberance. In the 70S ribosome it contacts protein S13 of the 30S subunit (bridge B1b), connecting the 2 subunits; this bridge is implicated in subunit movement. Contacts the P site tRNA; the 5S rRNA and some of its associated proteins might help stabilize positioning of ribosome-bound tRNAs. The protein is Large ribosomal subunit protein uL5 of Prosthecochloris aestuarii (strain DSM 271 / SK 413).